The chain runs to 1328 residues: Tubulin polyglutamylase TTLL5 (1328 aa).

A disordered region spans residues 1 to 22 (MPVVMARDLEETASSSEDEDLA). Residues 62 to 407 (RYHLSYKIVR…VCQDPAQRTS (346 aa)) form the TTL domain. Residues lysine 180, 186–187 (RG), 208–211 (SRYI), and 221–223 (KFD) contribute to the ATP site. Residue arginine 186 participates in a protein binding. Arginine 247 lines the L-glutamate pocket. Residue 268-269 (TN) participates in ATP binding. L-glutamate-binding residues include tyrosine 270, serine 271, and lysine 293. Residues aspartate 353, glutamate 366, and asparagine 368 each contribute to the Mg(2+) site. The tract at residues 378–488 (PLDLKIKASM…RGGFIRIFPT (111 aa)) is c-MTBD region. Residue lysine 384 coordinates L-glutamate. Disordered stretches follow at residues 411–436 (IYPS…SASD), 585–631 (AQPA…QAKY), 834–853 (HSKS…KGDH), 948–975 (PALL…PAGL), 1006–1032 (SSAK…EGED), 1085–1129 (RSSA…LQTG), and 1212–1271 (RISS…QLNG). Residues 420 to 432 (RNPFQKPQRTRPL) are compositionally biased toward polar residues. Residues 597 to 617 (ESEEEEEVGLDNDDEEQEASQ) are compositionally biased toward acidic residues. Over residues 838 to 847 (SKNSSSYSDS) the composition is skewed to low complexity. Composition is skewed to polar residues over residues 1116 to 1128 (THSS…SLQT), 1214 to 1227 (SSAT…NTLP), 1234 to 1248 (PNSS…SNHK), and 1257 to 1271 (QRAS…QLNG).

This sequence belongs to the tubulin--tyrosine ligase family. In terms of assembly, interacts with the transcriptional coactivators NCOA1/SRC-1 and NCOA2/TIF2. The cofactor is Mg(2+). As to expression, highly expressed in brain, kidney, liver, spleen and testis. Expressed in heart, lung, muscle and trachea.

Its subcellular location is the cell projection. The protein resides in the cilium. It is found in the cytoplasm. The protein localises to the cytoskeleton. It localises to the cilium basal body. Its subcellular location is the nucleus. The enzyme catalyses L-glutamyl-[protein] + L-glutamate + ATP = gamma-L-glutamyl-L-glutamyl-[protein] + ADP + phosphate + H(+). It catalyses the reaction (L-glutamyl)(n)-gamma-L-glutamyl-L-glutamyl-[protein] + L-glutamate + ATP = (L-glutamyl)(n+1)-gamma-L-glutamyl-L-glutamyl-[protein] + ADP + phosphate + H(+). Its function is as follows. Polyglutamylase which modifies tubulin, generating polyglutamate side chains on the gamma-carboxyl group of specific glutamate residues within the C-terminal tail of tubulin. Preferentially mediates ATP-dependent initiation step of the polyglutamylation reaction over the elongation step. Preferentially modifies the alpha-tubulin tail over a beta-tail. Required for CCSAP localization to both polyglutamylated spindle and cilia microtubules. Increases the effects of transcriptional coactivator NCOA2/TIF2 in glucocorticoid receptor-mediated repression and induction and in androgen receptor-mediated induction. This chain is Tubulin polyglutamylase TTLL5, found in Mus musculus (Mouse).